A 439-amino-acid polypeptide reads, in one-letter code: Glutamyl-tRNA reductase (439 aa).

Substrate contacts are provided by residues threonine 46–arginine 49, serine 111, glutamate 116–glutamate 118, and glutamine 122. The active-site Nucleophile is cysteine 47. Glycine 191–alanine 196 contributes to the NADP(+) binding site.

Belongs to the glutamyl-tRNA reductase family. Homodimer.

It catalyses the reaction (S)-4-amino-5-oxopentanoate + tRNA(Glu) + NADP(+) = L-glutamyl-tRNA(Glu) + NADPH + H(+). It participates in porphyrin-containing compound metabolism; protoporphyrin-IX biosynthesis; 5-aminolevulinate from L-glutamyl-tRNA(Glu): step 1/2. Catalyzes the NADPH-dependent reduction of glutamyl-tRNA(Glu) to glutamate 1-semialdehyde (GSA). The sequence is that of Glutamyl-tRNA reductase from Clavibacter michiganensis subsp. michiganensis (strain NCPPB 382).